Reading from the N-terminus, the 1537-residue chain is Histone-lysine N-methyltransferase, H3 lysine-79 specific (1537 aa).

One can recognise a DOT1 domain in the interval 16 to 330 (EPAVYPWPLP…ILENYFSSLK (315 aa)). S-adenosyl-L-methionine-binding positions include 136 to 139 (YGET), 159 to 168 (FVDLGSGVGQ), Glu-186, and 222 to 223 (DF). Ser-297 carries the phosphoserine modification. Residues 334 to 350 (LREEQEAARRRQQRESK) are compositionally biased toward basic and acidic residues. The interval 334 to 467 (LREEQEAARR…SPFYQLPPSV (134 aa)) is disordered. At Ser-374 the chain carries Phosphoserine. Residues 391-416 (PSKARKKKLNKKGRKMAGRKRGRPKK) are required for interaction with nucleosomes and DNA. Basic residues predominate over residues 393 to 416 (KARKKKLNKKGRKMAGRKRGRPKK). Positions 439–450 (QTVSQTAASSPQ) are enriched in polar residues. Residues Ser-448 and Ser-471 each carry the phosphoserine modification. The residue at position 480 (Thr-480) is a Phosphothreonine. A phosphoserine mark is found at Ser-775 and Ser-786. 4 disordered regions span residues 785–853 (LSQD…LRER), 893–912 (RAER…DPSS), 957–1128 (TPGA…LNLN), and 1145–1243 (SPET…KWKS). Positions 800–809 (LHSRAEHTKE) are enriched in basic and acidic residues. Ser-826 bears the Phosphoserine mark. Ser-834 bears the Phosphoserine; by MAPK11 mark. The segment covering 844–853 (KSSEKGLRER) has biased composition (basic and acidic residues). 3 stretches are compositionally biased toward polar residues: residues 899–912 (STPS…DPSS), 966–986 (DESS…STPQ), and 994–1010 (PRNS…SSSP). A Phosphothreonine; by MAPK11 modification is found at Thr-900. Ser-902 is subject to Phosphoserine; by MAPK11. Residue Thr-984 is modified to Phosphothreonine; by MAPK11. Residue Ser-997 is modified to Phosphoserine. A phosphoserine; by MAPK11 mark is found at Ser-1001 and Ser-1009. Residue Ser-1035 is modified to Phosphoserine. The segment covering 1048-1068 (TITTGAGSAKQSPSSKHSPLT) has biased composition (polar residues). Residue Ser-1093 is modified to Phosphoserine. Ser-1104 carries the phosphoserine; by MAPK11 modification. Over residues 1118–1128 (TQPSGSPLNLN) the composition is skewed to polar residues. A compositionally biased stretch (basic and acidic residues) spans 1158–1171 (QDHDQPPVLKKERP). A compositionally biased stretch (polar residues) spans 1172-1184 (LSQTNGAHYSPLT). Residues 1185–1195 (SDEEPGSEDEP) are compositionally biased toward acidic residues. Phosphoserine is present on residues Ser-1213 and Ser-1246. Positions 1334–1410 (GASLPHKGPE…DKTPLLSGKA (77 aa)) are disordered.

It belongs to the class I-like SAM-binding methyltransferase superfamily. DOT1 family. Interacts with MLLT10.

The protein localises to the nucleus. The enzyme catalyses L-lysyl(79)-[histone H3] + 3 S-adenosyl-L-methionine = N(6),N(6),N(6)-trimethyl-L-lysyl(79)-[histone H3] + 3 S-adenosyl-L-homocysteine + 3 H(+). Its function is as follows. Histone methyltransferase. Methylates 'Lys-79' of histone H3. Nucleosomes are preferred as substrate compared to free histones. Binds to DNA. In Homo sapiens (Human), this protein is Histone-lysine N-methyltransferase, H3 lysine-79 specific.